The sequence spans 384 residues: G protein-coupled receptor 88 (384 aa).

At 1–35 the chain is on the extracellular side; the sequence is MTNSSSTSTSSTTGGSLLLLCEEEESWAGRRIPVS. Asn3 is a glycosylation site (N-linked (GlcNAc...) asparagine). A helical membrane pass occupies residues 36–56; that stretch reads LLYSGLAIGGTLANGMVIYLV. The Cytoplasmic segment spans residues 57-73; sequence SSFRKLQTTSNAFIVNG. The helical transmembrane segment at 74–94 threads the bilayer; the sequence is CAADLSVCALWMPQEAVLGLL. The Extracellular segment spans residues 95–116; it reads PTGSAEPPADWDGAGGSYRLLR. Residues 117–136 form a helical membrane-spanning segment; the sequence is GGLLGLGLTVSLLSHCLVAL. At 137–158 the chain is on the cytoplasmic side; it reads NRYLLITRAPATYQALYQRRHT. Residues 159-179 traverse the membrane as a helical segment; the sequence is AGMLALSWALALGLVLLLPPW. Residues 180 to 195 lie on the Extracellular side of the membrane; it reads APRPGAAPPRVHYPAL. A helical transmembrane segment spans residues 196 to 216; sequence LAAAALLAQTALLLHCYLGIV. The Cytoplasmic segment spans residues 217 to 285; that stretch reads RRVRVSVKRV…RAQRRLSGLS (69 aa). The chain crosses the membrane as a helical span at residues 286-306; it reads VLLLCCVFLLATQPLVWVSLA. At 307-310 the chain is on the extracellular side; sequence SGFS. The chain crosses the membrane as a helical span at residues 311–331; sequence LPVPWGVQAASWLLCCALSAL. The Cytoplasmic portion of the chain corresponds to 332–384; that stretch reads NPLLYTWRNEEFRRSVRSVLPGVGDAAAAAVAATAVPAVSQAQLGTRAAGQHW.

Belongs to the G-protein coupled receptor 1 family. As to expression, expressed predominantly in the striatum.

Its subcellular location is the cell membrane. It localises to the cell projection. The protein resides in the cilium membrane. The protein localises to the cytoplasm. It is found in the nucleus. Orphan G protein-coupled receptor implicated in a large repertoire of behavioral responses that engage motor activities, spatial learning, and emotional processing. May play a role in the regulation of cognitive and motor function. Couples with the heterotrimeric G protein complex of the G(i) subfamily, consisting of GNAI1, GNB1 and GNG2, thereby acting through a G(i)-mediated pathway. Plays a role in the attenuation of D1 dopamine receptor (D1R)-mediated cAMP response in ciliated cells. In non-ciliated cells, involved in the inhibition of the beta-2 adrenergic receptor (B2AR) response. The polypeptide is G protein-coupled receptor 88 (GPR88) (Homo sapiens (Human)).